Reading from the N-terminus, the 407-residue chain is Transmembrane protein 184B (407 aa).

Residues 1-28 show a composition bias toward low complexity; that stretch reads MTVRGAALAPDPASPTTTTASPSVSATP. The interval 1-31 is disordered; sequence MTVRGAALAPDPASPTTTTASPSVSATPEGS. The next 7 membrane-spanning stretches (helical) occupy residues 40-60, 84-104, 121-141, 178-198, 214-234, 249-269, and 290-310; these read FLMTTAAQAISGFFVWTALLI, ILFIVPIYAFDSWLSLLFFTN, FVIYNFLSLCYEYLGGESAIM, LQFCVVKPLMAVSTVILQAFG, VTIIYNISVSLALYALFLFYF, FFMVKSVIFLSFWQGMLLAIL, and VAAGYQDFIICVEMFFAALAL. Residues 369 to 395 are disordered; that stretch reads TLEPGPTWRGGTHSLSRSHSLSGARDN. A phosphoserine mark is found at Ser-388, Ser-402, and Ser-403.

This sequence belongs to the TMEM184 family.

Its subcellular location is the membrane. In terms of biological role, may activate the MAP kinase signaling pathway. This is Transmembrane protein 184B (Tmem184b) from Mus musculus (Mouse).